Consider the following 259-residue polypeptide: 5'-nucleotidase SurE (259 aa).

A divalent metal cation contacts are provided by aspartate 8, aspartate 9, serine 40, and asparagine 92.

This sequence belongs to the SurE nucleotidase family. The cofactor is a divalent metal cation.

Its subcellular location is the cytoplasm. It catalyses the reaction a ribonucleoside 5'-phosphate + H2O = a ribonucleoside + phosphate. Its function is as follows. Nucleotidase that shows phosphatase activity on nucleoside 5'-monophosphates. This is 5'-nucleotidase SurE from Xanthomonas oryzae pv. oryzae (strain MAFF 311018).